We begin with the raw amino-acid sequence, 574 residues long: K(+)/H(+) antiporter NhaP2 (574 aa).

Transmembrane regions (helical) follow at residues 6-26 (INSF…LSPM), 30-50 (LGIP…EDGL), 58-78 (YSTA…DGGM), 87-107 (VALW…TSIT), 109-129 (LMAA…GAIV), 173-193 (IAIL…VSFI), 196-216 (FGLG…LVNL), 219-239 (LAEG…YAVS), 242-262 (LGGS…NKPT), 271-291 (VLDG…GLLL), 299-319 (ILLP…PLAV), 335-355 (WFIS…VFPM), and 359-379 (LPGA…SLLI). One can recognise an RCK C-terminal domain in the interval 405–486 (SGVEIYPSSE…LDALSHLFSQ (82 aa)).

The protein belongs to the monovalent cation:proton antiporter 1 (CPA1) transporter (TC 2.A.36) family. NhaP2 subfamily.

Its subcellular location is the cell inner membrane. The catalysed reaction is K(+)(in) + H(+)(out) = K(+)(out) + H(+)(in). K(+)/H(+) antiporter that extrudes potassium in exchange for external protons and maintains the internal concentration of potassium under toxic levels. In Shewanella sp. (strain W3-18-1), this protein is K(+)/H(+) antiporter NhaP2.